A 407-amino-acid chain; its full sequence is Tyrosine--tRNA ligase (407 aa).

The 'HIGH' region motif lies at 47 to 56 (PTAPDLHLGA). The 'KMSKS' region signature appears at 231-235 (KMSKS). Lys234 contributes to the ATP binding site. Positions 342-403 (PRLSQLLVQV…GKRHFARVAL (62 aa)) constitute an S4 RNA-binding domain.

This sequence belongs to the class-I aminoacyl-tRNA synthetase family. TyrS type 2 subfamily. In terms of assembly, homodimer.

Its subcellular location is the cytoplasm. It carries out the reaction tRNA(Tyr) + L-tyrosine + ATP = L-tyrosyl-tRNA(Tyr) + AMP + diphosphate + H(+). Its function is as follows. Catalyzes the attachment of tyrosine to tRNA(Tyr) in a two-step reaction: tyrosine is first activated by ATP to form Tyr-AMP and then transferred to the acceptor end of tRNA(Tyr). In Acidithiobacillus ferrooxidans (Thiobacillus ferrooxidans), this protein is Tyrosine--tRNA ligase.